Consider the following 260-residue polypeptide: Hydroxyethylthiazole kinase (260 aa).

Residue Met-38 participates in substrate binding. The ATP site is built by Arg-114 and Thr-159. Gly-186 is a binding site for substrate.

This sequence belongs to the Thz kinase family. Mg(2+) is required as a cofactor.

It carries out the reaction 5-(2-hydroxyethyl)-4-methylthiazole + ATP = 4-methyl-5-(2-phosphooxyethyl)-thiazole + ADP + H(+). It functions in the pathway cofactor biosynthesis; thiamine diphosphate biosynthesis; 4-methyl-5-(2-phosphoethyl)-thiazole from 5-(2-hydroxyethyl)-4-methylthiazole: step 1/1. In terms of biological role, catalyzes the phosphorylation of the hydroxyl group of 4-methyl-5-beta-hydroxyethylthiazole (THZ). The polypeptide is Hydroxyethylthiazole kinase (Helicobacter pylori (strain G27)).